We begin with the raw amino-acid sequence, 950 residues long: Xylosyltransferase 1 (950 aa).

The Cytoplasmic segment spans residues 1–17 (MVAAPSARRLVRRSHSA). Residues 18–38 (LLAALTVLLLQTLVGWNFSSL) traverse the membrane as a helical; Signal-anchor for type II membrane protein segment. Residues 39–950 (HSGAGERRGG…GAVKPDGRLR (912 aa)) lie on the Lumenal side of the membrane. The tract at residues 42–246 (AGERRGGAAA…ELRYDQPPKC (205 aa)) is disordered. Low complexity predominate over residues 91–104 (PPARARARALAGCP). Basic and acidic residues predominate over residues 134–150 (KVRTDSNNENSVPKDFE). The segment covering 152 to 161 (VDNSNFAPRT) has biased composition (polar residues). A compositionally biased stretch (basic and acidic residues) spans 166–193 (HQPELAKKPPSRQKELLKRRLEQEEKGK). Asparagine 215 is a glycosylation site (N-linked (GlcNAc...) asparagine). 4 disulfide bridges follow: cysteine 246-cysteine 274, cysteine 290-cysteine 531, cysteine 550-cysteine 563, and cysteine 552-cysteine 561. UDP-alpha-D-xylose is bound by residues valine 322, aspartate 350, and 379–381 (TIW). An N-linked (GlcNAc...) asparagine glycan is attached at asparagine 410. 483–484 (DW) is a binding site for UDP-alpha-D-xylose. UDP-alpha-D-xylose contacts are provided by residues serine 564 and 587–588 (RK). 2 disulfide bridges follow: cysteine 664-cysteine 918 and cysteine 911-cysteine 924. N-linked (GlcNAc...) asparagine glycosylation is present at asparagine 768. The segment at 931 to 950 (SFSPDPKSELGAVKPDGRLR) is disordered.

It belongs to the glycosyltransferase 14 family. XylT subfamily. In terms of assembly, monomer. Requires a divalent metal cation as cofactor. Post-translationally, contains 7 disulfide bonds. N-glycosylated.

Its subcellular location is the golgi apparatus membrane. It catalyses the reaction UDP-alpha-D-xylose + L-seryl-[protein] = 3-O-(beta-D-xylosyl)-L-seryl-[protein] + UDP + H(+). It functions in the pathway glycan metabolism; chondroitin sulfate biosynthesis. Its pathway is glycan metabolism; heparan sulfate biosynthesis. Catalyzes the first step in the biosynthesis of chondroitin sulfate and dermatan sulfate proteoglycans, such as DCN. Transfers D-xylose from UDP-D-xylose to specific serine residues of the core protein. Required for normal maturation of chondrocytes during bone development, normal onset of ossification and normal embryonic and postnatal skeleton development, especially of the long bones. The protein is Xylosyltransferase 1 (XYLT1) of Canis lupus familiaris (Dog).